A 124-amino-acid chain; its full sequence is Small ribosomal subunit protein uS13 (124 aa).

A disordered region spans residues 95-124 (GLPVNGQRTRTNARSSKGPRRTVAGKKKAR). Residues 100-109 (GQRTRTNARS) show a composition bias toward polar residues. Residues 111-124 (KGPRRTVAGKKKAR) are compositionally biased toward basic residues.

It belongs to the universal ribosomal protein uS13 family. As to quaternary structure, part of the 30S ribosomal subunit. Forms a loose heterodimer with protein S19. Forms two bridges to the 50S subunit in the 70S ribosome.

Its function is as follows. Located at the top of the head of the 30S subunit, it contacts several helices of the 16S rRNA. In the 70S ribosome it contacts the 23S rRNA (bridge B1a) and protein L5 of the 50S subunit (bridge B1b), connecting the 2 subunits; these bridges are implicated in subunit movement. Contacts the tRNAs in the A and P-sites. The polypeptide is Small ribosomal subunit protein uS13 (Tropheryma whipplei (strain TW08/27) (Whipple's bacillus)).